A 191-amino-acid polypeptide reads, in one-letter code: MEVILLERIAKLGQMGETVKVRDGFARNYLLPLGKALRANASNKARFEAERSTLEARNLERKSEAQKVAESLDGKSFIIVRSAGETGQLYGSVAARDIVETLAAEGFNINRNQVDLNQPIKAIGLHTVTLHLHGEVDVAIEINVARSAEEAERQAKGESLTSADAIYGVDEDALKPEDFFNPEAEIESEEE.

The tract at residues 151–191 is disordered; it reads AERQAKGESLTSADAIYGVDEDALKPEDFFNPEAEIESEEE.

Belongs to the bacterial ribosomal protein bL9 family.

Functionally, binds to the 23S rRNA. The polypeptide is Large ribosomal subunit protein bL9 (Sinorhizobium medicae (strain WSM419) (Ensifer medicae)).